Consider the following 288-residue polypeptide: Signal recognition particle receptor FtsY (288 aa).

Residues 93 to 100 (GINGTGKT), 175 to 179 (DTAGR), and 233 to 236 (TKLD) contribute to the GTP site.

This sequence belongs to the GTP-binding SRP family. FtsY subfamily. Part of the signal recognition particle protein translocation system, which is composed of SRP and FtsY.

The protein localises to the cell membrane. Its subcellular location is the cytoplasm. The catalysed reaction is GTP + H2O = GDP + phosphate + H(+). Functionally, involved in targeting and insertion of nascent membrane proteins into the cytoplasmic membrane. Acts as a receptor for the complex formed by the signal recognition particle (SRP) and the ribosome-nascent chain (RNC). The protein is Signal recognition particle receptor FtsY of Thermoplasma acidophilum (strain ATCC 25905 / DSM 1728 / JCM 9062 / NBRC 15155 / AMRC-C165).